A 339-amino-acid polypeptide reads, in one-letter code: Cobalt-precorrin-5B C(1)-methyltransferase (339 aa).

The protein belongs to the CbiD family.

The enzyme catalyses Co-precorrin-5B + S-adenosyl-L-methionine = Co-precorrin-6A + S-adenosyl-L-homocysteine. The protein operates within cofactor biosynthesis; adenosylcobalamin biosynthesis; cob(II)yrinate a,c-diamide from sirohydrochlorin (anaerobic route): step 6/10. Functionally, catalyzes the methylation of C-1 in cobalt-precorrin-5B to form cobalt-precorrin-6A. This is Cobalt-precorrin-5B C(1)-methyltransferase from Methanosarcina acetivorans (strain ATCC 35395 / DSM 2834 / JCM 12185 / C2A).